The chain runs to 480 residues: UDP-glucose 6-dehydrogenase 3 (480 aa).

NAD(+) contacts are provided by residues 8–13, Asp-33, Arg-38, 86–90, 127–128, and Glu-161; these read GAGYVG, VNTPT, and ST. Residues 157 to 161, 216 to 223, and 256 to 269 contribute to the substrate site; these read EFLAE, KLAANAFL, and RIGPKFLNASVGFG. Cys-272 serves as the catalytic Nucleophile. An NAD(+)-binding site is contributed by 272–275; sequence CFQK. 334–335 contacts substrate; it reads FK. Residue Arg-342 participates in NAD(+) binding. A Phosphoserine modification is found at Ser-393. Arg-447 lines the substrate pocket.

The protein belongs to the UDP-glucose/GDP-mannose dehydrogenase family.

The enzyme catalyses UDP-alpha-D-glucose + 2 NAD(+) + H2O = UDP-alpha-D-glucuronate + 2 NADH + 3 H(+). Its pathway is nucleotide-sugar biosynthesis; UDP-alpha-D-glucuronate biosynthesis; UDP-alpha-D-glucuronate from UDP-alpha-D-glucose: step 1/1. Functionally, involved in the biosynthesis of UDP-glucuronic acid (UDP-GlcA), providing nucleotide sugars for cell-wall polymers. The sequence is that of UDP-glucose 6-dehydrogenase 3 (UGD3) from Oryza sativa subsp. japonica (Rice).